A 357-amino-acid polypeptide reads, in one-letter code: Protein NDRG2 (357 aa).

Positions 1–14 (MAELREVQITEEKP) are enriched in basic and acidic residues. Residues 1–26 (MAELREVQITEEKPLLPGQTPEVAKT) are disordered. An N-acetylalanine modification is found at Ala2. At Thr20 the chain carries Phosphothreonine. 2 positions are modified to phosphoserine: Ser312 and Ser314. A Phosphothreonine modification is found at Thr316. Ser318 bears the Phosphoserine mark. Thr320 carries the phosphothreonine modification. Positions 320–357 (TSAASIDGNRSRSRTLSQSSESGTLSSGPPGHTMEVSC) are disordered. Ser321, Ser324, and Ser330 each carry phosphoserine. The segment covering 333–347 (RTLSQSSESGTLSSG) has biased composition (low complexity). Thr334 carries the post-translational modification Phosphothreonine. Residues Ser336, Ser338, Ser339, and Ser341 each carry the phosphoserine modification. Thr343 bears the Phosphothreonine mark. A Phosphoserine modification is found at Ser356.

It belongs to the NDRG family. Interacts with CTNNB1.

It is found in the cytoplasm. The protein localises to the perinuclear region. Its subcellular location is the cell projection. It localises to the growth cone. Its function is as follows. Contributes to the regulation of the Wnt signaling pathway. Down-regulates CTNNB1-mediated transcriptional activation of target genes, such as CCND1, and may thereby act as tumor suppressor. May be involved in dendritic cell and neuron differentiation. In Bos taurus (Bovine), this protein is Protein NDRG2 (NDRG2).